Consider the following 276-residue polypeptide: F-actin-capping protein subunit beta (276 aa).

It belongs to the F-actin-capping protein beta subunit family. As to quaternary structure, component of the F-actin capping complex, composed of a heterodimer of an alpha and a beta subunit. Subunit of dynactin, a multiprotein complex part of a tripartite complex with dynein and a adapter, such as BICDL1, BICD2 or HOOK3.

It localises to the cytoplasm. The protein localises to the cytoskeleton. Its function is as follows. F-actin-capping proteins bind in a Ca(2+)-independent manner to the fast growing ends of actin filaments (barbed end) thereby blocking the exchange of subunits at these ends. Unlike other capping proteins (such as gelsolin and severin), these proteins do not sever actin filaments. Forms, with CAPZB, the barbed end of the fast growing ends of actin filaments in the dynactin complex and stabilizes dynactin structure. The dynactin multiprotein complex activates the molecular motor dynein for ultra-processive transport along microtubules. The sequence is that of F-actin-capping protein subunit beta (cpb) from Drosophila melanogaster (Fruit fly).